A 350-amino-acid chain; its full sequence is DNA repair protein rhp55 (350 aa).

51-58 (GAPGMGKT) contributes to the ATP binding site. Residues 331–350 (QSIPTNSSQRRKRSILECES) form a disordered region.

Belongs to the RecA family. RAD55 subfamily.

It localises to the nucleus. Its function is as follows. Required for radiation resistance and meiotic viability and acts in recombination and recombinational DNA repair pathways. This is DNA repair protein rhp55 (rhp55) from Schizosaccharomyces pombe (strain 972 / ATCC 24843) (Fission yeast).